We begin with the raw amino-acid sequence, 759 residues long: MKCARLNDRIIHLHTYSREHYQFLFEEGIKGHLFCSHCGKPVLLRLNIADPPEFIHRQPGDFPACEEACEPKPSKEGKKEDDQESGVIRLPKGKAIAADPSPAVTEWHRPRSIKPGTPFVPKTIEPDTSLFPSVGLNTDQLKAVTETEGPLLVLAGAGSGKTRVLTARAAHMIEHLGIPPENMLLVTFTTKAVAEMKERMANQYGLQPAKVRRIVTGTFHSLFYKILYHSNSAKWNGEHLLKMEWQREQYIKKALYEEGIDEKESPVDQALQQIGFWKNTYVPNERIPLKDEWEKQVYRLYEHYERQKKEHSQFDFDDMASACYELFIERPDLLEQYQSRFTYILIDEFQDINPVQYKIMQMLASPEQNLCCVGDDDQSIYAFRGSNPSFILDFQKDYPGAKTIYLTANYRSTHPIVSSADIVVKKNKNRYAKTLEAARDDIQVPVLFYPYDEEEEATMVVSDIKEKIQNGASPEDFAVLYRTNSGGRAIYERLHQSSIPYTADRGVQSFYSRRIVRQILAYLYASQNEDDTEAIKHLLPALFLKQSALNTLKALSITEDCTMIKALAKLPDLKPFQLDKIKKIVPFFASLRTMKPVEAITFAEGKMGFSEYLKKRGNEGNKLEKGSDDLRDIKVVAKKFKTIPDFLAHVDHMRAAEKNRTDEHGVQLMTIHRSKGLEFKTVYVLGTVDGSIPHDFSLETARKGDEAALEEERRLLYVAMTRAKQHLYLSCPANRRGKTANRSRFLYPLLQKARQPLHH.

Residues 68 to 121 (ACEPKPSKEGKKEDDQESGVIRLPKGKAIAADPSPAVTEWHRPRSIKPGTPFVP) are disordered. Residues 69–81 (CEPKPSKEGKKED) are compositionally biased toward basic and acidic residues. The UvrD-like helicase ATP-binding domain maps to 134–413 (VGLNTDQLKA…IYLTANYRST (280 aa)). Residues 158-163 (GSGKTR) and Arg-411 each bind ATP. The UvrD-like helicase C-terminal domain maps to 414–676 (HPIVSSADIV…QLMTIHRSKG (263 aa)).

Belongs to the helicase family. UvrD subfamily.

Its subcellular location is the cytoplasm. It carries out the reaction Couples ATP hydrolysis with the unwinding of duplex DNA by translocating in the 3'-5' direction.. The enzyme catalyses ATP + H2O = ADP + phosphate + H(+). Functionally, may be involved in the generation of recombinogenic substrates for the subsequent action of RecA. The chain is Putative ATP-dependent DNA helicase YjcD (yjcD) from Bacillus subtilis (strain 168).